A 166-amino-acid chain; its full sequence is Large ribosomal subunit protein mL41 (166 aa).

The transit peptide at 1–26 (MNNCIKVVPIALRCQQRTISTSSVLE) directs the protein to the mitochondrion. Residues 136–166 (KDGSAKEPSVNEQLTPEEALQRARKTGSDIF) form a disordered region.

The protein belongs to the mitochondrion-specific ribosomal protein mL41 family. In terms of assembly, component of the mitochondrial ribosome large subunit (39S) which comprises a 16S rRNA and about 50 distinct proteins.

It localises to the mitochondrion. The protein is Large ribosomal subunit protein mL41 (mRpL41) of Drosophila melanogaster (Fruit fly).